A 263-amino-acid chain; its full sequence is MNDNFKKQPHHLIYEELLQQGITLGITTRGDGLSDYPKNAFNMARYIDDRPYNITQHQLQLAEEIAFDRKNWVFPIQTHENKVACITKDDIGTNIDTLTDALHGIDAMYTYDSNVLLTMCYADCVPVYFYSTKHHFIALAHAGWRGTYTEIVKEVLKHVNFDLKDLHVVIGPSTSSSYEINDDIKNKFETLPIDSANYIETRGRDRHGIDLKKANAELLNYYGVPKENIYTTAYATSEHLELFFSYRLEKGQTGRMLAFIGQQ.

3 residues coordinate Zn(2+): His-79, Cys-124, and His-141.

This sequence belongs to the purine nucleoside phosphorylase YfiH/LACC1 family. Homodimer. Cu(2+) is required as a cofactor. Requires Zn(2+) as cofactor.

It catalyses the reaction adenosine + phosphate = alpha-D-ribose 1-phosphate + adenine. It carries out the reaction S-methyl-5'-thioadenosine + phosphate = 5-(methylsulfanyl)-alpha-D-ribose 1-phosphate + adenine. The enzyme catalyses inosine + phosphate = alpha-D-ribose 1-phosphate + hypoxanthine. The catalysed reaction is adenosine + H2O + H(+) = inosine + NH4(+). Purine nucleoside enzyme that catalyzes the phosphorolysis of adenosine and inosine nucleosides, yielding D-ribose 1-phosphate and the respective free bases, adenine and hypoxanthine. Also catalyzes the phosphorolysis of S-methyl-5'-thioadenosine into adenine and S-methyl-5-thio-alpha-D-ribose 1-phosphate. Also has adenosine deaminase activity. This is Purine nucleoside phosphorylase SAV1187 from Staphylococcus aureus (strain Mu50 / ATCC 700699).